The primary structure comprises 225 residues: Glutathione S-transferase A (225 aa).

Residues 3–85 (KDMTLLWGSG…YLESQFKSQG (83 aa)) enclose the GST N-terminal domain. Residue Arg-18 coordinates glutathione. Residues 92–217 (CPAEQAMMYQ…WPPTWLESPQ (126 aa)) form the GST C-terminal domain.

It belongs to the GST superfamily. Theta family. As to quaternary structure, homodimer. In terms of tissue distribution, found in all the tissues examined. Highest values found in liver and in intestinal mucosa.

It is found in the cytoplasm. The enzyme catalyses RX + glutathione = an S-substituted glutathione + a halide anion + H(+). Functionally, conjugation of reduced glutathione to a wide number of exogenous and endogenous hydrophobic electrophiles. The chain is Glutathione S-transferase A from Pleuronectes platessa (European plaice).